The sequence spans 1032 residues: Leucine-rich repeat and coiled-coil domain-containing protein 1 (1032 aa).

LRR repeat units follow at residues 44–65 (TLHA…DHIW), 66–87 (NLQH…NTLT), 88–109 (KLCT…EELI), 110–131 (NLTR…IPLH), and 136–157 (KLRY…LQCM). An LRRCT domain is found at 175-218 (NPVCRLPGYRAVILQTLPQLRILDCKNIFGEPVNLTEINSSQLQ). A disordered region spans residues 316–345 (DNVLEKDPRPKRDTDITSESDYGNRKECNR). Residues 318 to 330 (VLEKDPRPKRDTD) are compositionally biased toward basic and acidic residues. A coiled-coil region spans residues 421 to 647 (NTYQSLVEQL…DLENEFRIAL (227 aa)).

This sequence belongs to the LRRCC1 family.

It localises to the cytoplasm. Its subcellular location is the cytoskeleton. It is found in the microtubule organizing center. The protein resides in the centrosome. The protein localises to the centriole. Functionally, required for the organization of the mitotic spindle. Maintains the structural integrity of centrosomes during mitosis. This Homo sapiens (Human) protein is Leucine-rich repeat and coiled-coil domain-containing protein 1 (LRRCC1).